A 248-amino-acid chain; its full sequence is 3-deoxy-manno-octulosonate cytidylyltransferase (248 aa).

This sequence belongs to the KdsB family.

It localises to the cytoplasm. It catalyses the reaction 3-deoxy-alpha-D-manno-oct-2-ulosonate + CTP = CMP-3-deoxy-beta-D-manno-octulosonate + diphosphate. It participates in nucleotide-sugar biosynthesis; CMP-3-deoxy-D-manno-octulosonate biosynthesis; CMP-3-deoxy-D-manno-octulosonate from 3-deoxy-D-manno-octulosonate and CTP: step 1/1. It functions in the pathway bacterial outer membrane biogenesis; lipopolysaccharide biosynthesis. In terms of biological role, activates KDO (a required 8-carbon sugar) for incorporation into bacterial lipopolysaccharide in Gram-negative bacteria. The chain is 3-deoxy-manno-octulosonate cytidylyltransferase from Chlorobium phaeobacteroides (strain BS1).